The chain runs to 49 residues: Large ribosomal subunit protein bL33 (49 aa).

The protein belongs to the bacterial ribosomal protein bL33 family.

This chain is Large ribosomal subunit protein bL33, found in Clostridioides difficile (strain 630) (Peptoclostridium difficile).